Here is a 160-residue protein sequence, read N- to C-terminus: uncharacterized protein (160 aa).

Residues 20–152 enclose the HTH marR-type domain; the sequence is EREIWVLYMK…VYEGLSILSR (133 aa). Positions 66 to 89 form a DNA-binding region, H-T-H motif; sequence VSDIAEKMGASLSNTTGLLDRLEK.

This is an uncharacterized protein from Bacillus subtilis (strain 168).